We begin with the raw amino-acid sequence, 143 residues long: Transcriptional regulator MraZ (143 aa).

SpoVT-AbrB domains lie at 5–47 (TYTP…PRAA) and 76–119 (TDEQ…DAQA).

The protein belongs to the MraZ family. Forms oligomers.

Its subcellular location is the cytoplasm. It localises to the nucleoid. This chain is Transcriptional regulator MraZ, found in Mycobacterium bovis (strain ATCC BAA-935 / AF2122/97).